Here is a 309-residue protein sequence, read N- to C-terminus: Taste receptor type 2 member 8 (309 aa).

Topologically, residues 1–7 (MFSPADN) are extracellular. A helical membrane pass occupies residues 8-28 (IFIILITGEFILGILGNGYIA). At 29–50 (LVNWIDWIKKKKISTVDYILTN) the chain is on the cytoplasmic side. A helical membrane pass occupies residues 51-71 (LVIARICLISVMVVNGIVIVL). Over 72–82 (NPDVYTKNKQQ) the chain is Extracellular. Residues 83-103 (IVIFTFWTFANYLNMWITTCL) form a helical membrane-spanning segment. The Cytoplasmic segment spans residues 104-131 (NVFYFLKIASSSHPLFLWLKWKIDMVVH). Residues 132–152 (WILLGCFAISLLVSLIAAIVL) form a helical membrane-spanning segment. The Extracellular segment spans residues 153–184 (SCDYRFHAIAKHKRNITEMFXVSKIPYFEPLT). An N-linked (GlcNAc...) asparagine glycan is attached at asparagine 167. The helical transmembrane segment at 185-205 (LFNLFAIVPFIVSLISFFLLV) threads the bilayer. Residues 206–239 (RSLWRHTKQIKLYATGSRDPSTEVHVRAIKTMTS) lie on the Cytoplasmic side of the membrane. The helical transmembrane segment at 240 to 260 (FIFFFFLYFISSILMTFSYLM) threads the bilayer. Residues 261-266 (TKYKLA) lie on the Extracellular side of the membrane. Residues 267–287 (VEFGEIAAILYPLGHSLILIV) form a helical membrane-spanning segment. Residues 288–309 (LNNKLRQIFVRMLTCRKIACVI) are Cytoplasmic-facing.

Belongs to the G-protein coupled receptor T2R family.

The protein resides in the membrane. Its function is as follows. Receptor that may play a role in the perception of bitterness and is gustducin-linked. May play a role in sensing the chemical composition of the gastrointestinal content. The activity of this receptor may stimulate alpha gustducin, mediate PLC-beta-2 activation and lead to the gating of TRPM5. The protein is Taste receptor type 2 member 8 (TAS2R8) of Pan troglodytes (Chimpanzee).